The following is a 378-amino-acid chain: Response regulator aspartate phosphatase A (378 aa).

6 TPR repeats span residues 101–137, 148–181, 183–215, 222–255, 261–294, and 336–369; these read YYFN…VSDD, AEIF…TVRR, QCEF…AKKE, SSAL…CKSE, PHSI…ARQY, and EELA…QKQI.

This sequence belongs to the Rap family. As to quaternary structure, homodimer. Interacts with its substrate, phosphorylated Spo0F, and its inhibitor, the PhrA pentapeptide. The RapA dimer forms a stable complex with two molecules of phosphorylated Spo0F. The complex is dissociated after dephosphorylation of Spo0F by RapA. Mn(2+) serves as cofactor.

It localises to the cytoplasm. With respect to regulation, phosphatase activity is inhibited by the phosphatase regulator PhrA. Interaction with PhrA dissociates the RapA-Spo0F complex. Activity is abolished in the presence of EDTA. Involved in the regulation of sporulation. Acts as a phosphatase that specifically dephosphorylates the sporulation initiation phosphotransferase Spo0F and inhibits its activity. The sequence is that of Response regulator aspartate phosphatase A from Bacillus subtilis (strain 168).